We begin with the raw amino-acid sequence, 420 residues long: Synaptosomal-associated protein 47 (420 aa).

T-SNARE coiled-coil homology domains follow at residues 110 to 172 (AEAA…LTEL) and 357 to 419 (TSEP…MKKL). The disordered stretch occupies residues 338–357 (ATHCEPSSGSQEGRPLQLQT). Residues 342–357 (EPSSGSQEGRPLQLQT) are compositionally biased toward polar residues.

Belongs to the SVAP1 family. As to quaternary structure, forms a complex containing SNAP47, VAMP2 and STX1A. Associates with the BLOC-1 complex. Interacts with BLOC1S6.

The protein localises to the endomembrane system. Its subcellular location is the cytoplasm. It localises to the perinuclear region. Functionally, may play a role in intracellular membrane fusion. The sequence is that of Synaptosomal-associated protein 47 (SNAP47) from Bos taurus (Bovine).